Reading from the N-terminus, the 397-residue chain is MSTLLNPYFGEFGGMYVPQILMPALRQLEEAFVSAQSDAEFQAQFTDLLKNYAGRPTALTKCQNLTEGTRTTLYLKREDLLHGGAHKTNQVLGQALLAKRMGKTEIIAETGAGQHGVASALASALLGLKCRIYMGAKDVERQSPNVFRMKLMGAEVIPVYSGSATLKDACNEALRDWSGSYDRAHYMLGTAAGPHPFPTIVREFQRMIGEETRAQIMEKEGRLPDAVIACVGGGSNAIGMFADFINETSVGLIGVEPAGHGIETGEHGAPLKHGRVGIYFGMKAPMMQTDDGQIEESYSISAGLDFPSVGPQHAYLNSTGRAEYVSITDDEALEAFKTLCRQEGIIPALESSHALAHALKMMRAAPEKEQLLVVNLSGRGDKDIFTVHDIFKARGEM.

Position 87 is an N6-(pyridoxal phosphate)lysine (lysine 87).

The protein belongs to the TrpB family. As to quaternary structure, tetramer of two alpha and two beta chains. Pyridoxal 5'-phosphate serves as cofactor.

It catalyses the reaction (1S,2R)-1-C-(indol-3-yl)glycerol 3-phosphate + L-serine = D-glyceraldehyde 3-phosphate + L-tryptophan + H2O. It participates in amino-acid biosynthesis; L-tryptophan biosynthesis; L-tryptophan from chorismate: step 5/5. In terms of biological role, the beta subunit is responsible for the synthesis of L-tryptophan from indole and L-serine. The protein is Tryptophan synthase beta chain of Cronobacter sakazakii (strain ATCC BAA-894) (Enterobacter sakazakii).